An 85-amino-acid polypeptide reads, in one-letter code: Toxin TdNa9 (85 aa).

The signal sequence occupies residues 1-21; that stretch reads MLKFAIAVALLLFIGLELREA. Residues 22-84 form the LCN-type CS-alpha/beta domain; sequence RDGYPQSKVN…YGDPGTKPCM (63 aa). Cystine bridges form between Cys-33–Cys-83, Cys-37–Cys-58, Cys-43–Cys-63, and Cys-47–Cys-65.

The protein belongs to the long (4 C-C) scorpion toxin superfamily. Sodium channel inhibitor family. Beta subfamily. Expressed by the venom gland.

It localises to the secreted. In terms of biological role, alpha toxins bind voltage-independently at site-3 of sodium channels (Nav) and inhibit the inactivation of the activated channels, thereby blocking neuronal transmission. This toxin binds, in vitro, to sodium channels and inhibits the inactivation of the activated channels. Seems not toxic to mice, crickets and sweet-water shrimps. The polypeptide is Toxin TdNa9 (Tityus discrepans (Venezuelan scorpion)).